The chain runs to 431 residues: Peptidase B (431 aa).

Positions 196 and 201 each coordinate Mn(2+). Residue lysine 208 is part of the active site. Aspartate 219, aspartate 278, and glutamate 280 together coordinate Mn(2+). Residue arginine 282 is part of the active site.

This sequence belongs to the peptidase M17 family. In terms of assembly, homohexamer. Mn(2+) serves as cofactor.

The protein resides in the cytoplasm. It carries out the reaction Release of an N-terminal amino acid, Xaa, from a peptide or arylamide. Xaa is preferably Glu or Asp but may be other amino acids, including Leu, Met, His, Cys and Gln.. Its function is as follows. Probably plays an important role in intracellular peptide degradation. The protein is Peptidase B of Photorhabdus laumondii subsp. laumondii (strain DSM 15139 / CIP 105565 / TT01) (Photorhabdus luminescens subsp. laumondii).